Consider the following 104-residue polypeptide: Large ribosomal subunit protein bL21 (104 aa).

It belongs to the bacterial ribosomal protein bL21 family. In terms of assembly, part of the 50S ribosomal subunit. Contacts protein L20.

This protein binds to 23S rRNA in the presence of protein L20. The sequence is that of Large ribosomal subunit protein bL21 from Elusimicrobium minutum (strain Pei191).